Here is a 174-residue protein sequence, read N- to C-terminus: Large ribosomal subunit protein uL10 (174 aa).

This sequence belongs to the universal ribosomal protein uL10 family. Part of the ribosomal stalk of the 50S ribosomal subunit. The N-terminus interacts with L11 and the large rRNA to form the base of the stalk. The C-terminus forms an elongated spine to which L12 dimers bind in a sequential fashion forming a multimeric L10(L12)X complex.

Forms part of the ribosomal stalk, playing a central role in the interaction of the ribosome with GTP-bound translation factors. The polypeptide is Large ribosomal subunit protein uL10 (Bordetella petrii (strain ATCC BAA-461 / DSM 12804 / CCUG 43448)).